The primary structure comprises 88 residues: Small ribosomal subunit protein uS17 (88 aa).

This sequence belongs to the universal ribosomal protein uS17 family. As to quaternary structure, part of the 30S ribosomal subunit.

Its function is as follows. One of the primary rRNA binding proteins, it binds specifically to the 5'-end of 16S ribosomal RNA. The chain is Small ribosomal subunit protein uS17 from Prochlorococcus marinus (strain MIT 9312).